Reading from the N-terminus, the 1134-residue chain is MVWWGSSLLLPTLFLASHVGASVDLTLLANLRITDPQRFFLTCVSGEAGAGRSSDPPLLLEKDDRIVRTFPPGQPLYLARNGSHQVTLRGFSKPSDLVGVFSCVGGAGARRTRVLYVHNSPGAHLFPDKVTHTVNKGDTAVLSAHVHKEKQTDVIWKNNGSYFNTLDWQEADDGRFQLQLQNVQPPSSGIYSATYLEASPLGSAFFRLIVRGCGAGRWGPGCVKDCPGCLHGGVCHDHDGECVCPPGFTGTRCEQACREGRFGQSCQEQCPGTAGCRGLTFCLPDPYGCSCGSGWRGSQCQEACAPGHFGADCRLQCQCQNGGTCDRFSGCVCPSGWHGVHCEKSDRIPQILSMATEVEFNIGTMPRINCAAAGNPFPVRGSMKLRKPDGTMLLSTKVIVEPDRTTAEFEVPSLTLGDSGFWECRVSTSGGQDSRRFKVNVKVPPVPLTAPRLLAKQSRQLVVSPLVSFSGDGPISSVRLHYRPQDSTIAWSAIVVDPSENVTLMNLKPKTGYNVRVQLSRPGEGGEGGWGPSALMTTDCPEPLLQPWLESWHVEGPDRLRVSWSLPSVPLSGDGFLLRLWDGARGQERRENISFPQARTALLTGLTPGTHYQLDVRLYHCTLLGPASPPAHVHLPPSGPPAPRHLHAQALSDSEIQLMWQHPEAPSGPISKYIVEIQVAGGSGDPQWMDVDRPEETSIIVRGLNASTRYLFRVRASVQGLGDWSNTVEEATLGNGLQSEGPVRESRAAEEGLDQQLVLAVVGSVSATCLTILAALLALVCIRRSCLHRRRTFTYQSGSGEETILQFSSGTLTLTRRPKPQPEPLSYPVLEWEDITFEDLIGEGNFGQVIRAMIKKDGLKMNAAIKMLKEYASENDHRDFAGELEVLCKLGHHPNIINLLGACENRGYLYIAIEYAPYGNLLDFLRKSRVLETDPAFAREHGTASTLSSRQLLRFASDAANGMQYLSEKQFIHRDLAARNVLVGENLASKIADFGLSRGEEVYVKKTMGRLPVRWMAIESLNYSVYTTKSDVWSFGVLLWEIVSLGGTPYCGMTCAELYEKLPQGYRMEQPRNCDDEVYELMRQCWRDRPYERPPFAQIALQLGRMLEARKAYVNMSLFENFTYAGIDATAEEA.

The first 22 residues, 1–22 (MVWWGSSLLLPTLFLASHVGAS), serve as a signal peptide directing secretion. Over 23-755 (VDLTLLANLR…SRAAEEGLDQ (733 aa)) the chain is Extracellular. An Ig-like C2-type 1 domain is found at 43–123 (CVSGEAGAGR…VLYVHNSPGA (81 aa)). Asn-81 and Asn-159 each carry an N-linked (GlcNAc...) asparagine glycan. 3 consecutive EGF-like domains span residues 212–254 (GCGA…TRCE), 256–301 (ACRE…SQCQ), and 303–343 (ACAP…VHCE). 9 disulfide bridges follow: Cys-226–Cys-235, Cys-229–Cys-242, Cys-244–Cys-253, Cys-266–Cys-276, Cys-270–Cys-289, Cys-291–Cys-300, Cys-313–Cys-325, Cys-319–Cys-331, and Cys-333–Cys-342. An Ig-like C2-type 2 domain is found at 349-440 (PQILSMATEV…GQDSRRFKVN (92 aa)). Fibronectin type-III domains follow at residues 444–543 (PPVP…CPEP), 546–638 (QPWL…LPPS), and 642–736 (APRH…LGNG). N-linked (GlcNAc...) asparagine glycosylation is found at Asn-501, Asn-592, and Asn-705. A helical transmembrane segment spans residues 756–780 (QLVLAVVGSVSATCLTILAALLALV). Residues 781 to 1134 (CIRRSCLHRR…AGIDATAEEA (354 aa)) lie on the Cytoplasmic side of the membrane. Positions 835–1114 (ITFEDLIGEG…RMLEARKAYV (280 aa)) constitute a Protein kinase domain. ATP contacts are provided by residues 841–849 (IGEGNFGQV) and Lys-866. Asp-975 (proton acceptor) is an active-site residue. Tyr-1003 is subject to Phosphotyrosine; by autocatalysis.

Belongs to the protein kinase superfamily. Tyr protein kinase family. Tie subfamily. Heterodimer with TEK/TIE2. Interacts with SVEP1 (via C-terminus). In terms of processing, phosphorylated on tyrosine residues in response to ANGPT1, most likely by TEK/TIE2. As to expression, specifically expressed in developing vascular endothelial cells. Abundantly expressed in lung and heart, moderately in brain, liver and kidney, and weakly in thymus, spleen and testis.

Its subcellular location is the cell membrane. The enzyme catalyses L-tyrosyl-[protein] + ATP = O-phospho-L-tyrosyl-[protein] + ADP + H(+). Functionally, transmembrane tyrosine-protein kinase that may modulate TEK/TIE2 activity and contribute to the regulation of angiogenesis. The chain is Tyrosine-protein kinase receptor Tie-1 (Tie1) from Mus musculus (Mouse).